The chain runs to 72 residues: SRY-related protein ADW5 (72 aa).

A DNA-binding region (HMG box) is located at residues Val-1–Lys-69.

It is found in the nucleus. The polypeptide is SRY-related protein ADW5 (Alligator mississippiensis (American alligator)).